We begin with the raw amino-acid sequence, 97 residues long: RxLR effector protein CRE10 (97 aa).

Positions 1-21 (MRLSYILVVVIAVTLQACVCA) are cleaved as a signal peptide. The short motif at 48 to 66 (RLLRGVKKRTAEREVQEER) is the RxLR-dEER element.

It belongs to the RxLR effector family.

Its subcellular location is the secreted. It localises to the host cell. Effector that is involved in host plant infection. Contributes to virulence during the early infection stage, by inhibiting plant defense responses induced by both PAMP-triggered immunity (PTI) and effector-triggered immunity (ETI). The sequence is that of RxLR effector protein CRE10 from Phytophthora infestans (strain T30-4) (Potato late blight agent).